Consider the following 376-residue polypeptide: tRNA-specific 2-thiouridylase MnmA (376 aa).

ATP contacts are provided by residues A9–S16 and M35. C105 (nucleophile) is an active-site residue. Residues C105 and C202 are joined by a disulfide bond. An ATP-binding site is contributed by G129. An interaction with tRNA region spans residues K151–Q153. C202 (cysteine persulfide intermediate) is an active-site residue. The interval R312–Y313 is interaction with tRNA.

Belongs to the MnmA/TRMU family.

The protein localises to the cytoplasm. The enzyme catalyses S-sulfanyl-L-cysteinyl-[protein] + uridine(34) in tRNA + AH2 + ATP = 2-thiouridine(34) in tRNA + L-cysteinyl-[protein] + A + AMP + diphosphate + H(+). Catalyzes the 2-thiolation of uridine at the wobble position (U34) of tRNA, leading to the formation of s(2)U34. This Amoebophilus asiaticus (strain 5a2) protein is tRNA-specific 2-thiouridylase MnmA.